The primary structure comprises 399 residues: S-adenosylmethionine synthase (399 aa).

His16 serves as a coordination point for ATP. Asp18 is a binding site for Mg(2+). Glu44 is a K(+) binding site. Glu57 and Gln100 together coordinate L-methionine. Positions 100-110 are flexible loop; it reads QSPDIAQGVDD. ATP contacts are provided by residues 174 to 176, 241 to 242, Asp250, 256 to 257, Ala273, and Lys277; these read DAK, RF, and RK. An L-methionine-binding site is contributed by Asp250. An L-methionine-binding site is contributed by Lys281.

This sequence belongs to the AdoMet synthase family. Homotetramer; dimer of dimers. Mg(2+) is required as a cofactor. The cofactor is K(+).

The protein localises to the cytoplasm. The enzyme catalyses L-methionine + ATP + H2O = S-adenosyl-L-methionine + phosphate + diphosphate. It participates in amino-acid biosynthesis; S-adenosyl-L-methionine biosynthesis; S-adenosyl-L-methionine from L-methionine: step 1/1. Catalyzes the formation of S-adenosylmethionine (AdoMet) from methionine and ATP. The overall synthetic reaction is composed of two sequential steps, AdoMet formation and the subsequent tripolyphosphate hydrolysis which occurs prior to release of AdoMet from the enzyme. This is S-adenosylmethionine synthase from Latilactobacillus sakei subsp. sakei (strain 23K) (Lactobacillus sakei subsp. sakei).